A 290-amino-acid chain; its full sequence is Arylamine N-acetyltransferase 1 (290 aa).

An N-acetylmethionine modification is found at Met-1. Cys-68 serves as the catalytic Acyl-thioester intermediate. Position 103 (Ser-103) interacts with CoA. Residue 106-107 (VH) coordinates substrate. Residues His-107 and Asp-122 contribute to the active site. Tyr-208 serves as a coordination point for CoA.

The protein belongs to the arylamine N-acetyltransferase family.

It is found in the cytoplasm. It catalyses the reaction an arylamine + acetyl-CoA = an N-acetylarylamine + CoA. Functionally, participates in the detoxification of a plethora of hydrazine and arylamine drugs. Acetylates both arylamines and arylalkylamines. This is Arylamine N-acetyltransferase 1 (Nat1) from Rattus norvegicus (Rat).